Here is a 455-residue protein sequence, read N- to C-terminus: Ribosome biogenesis protein NOP53 (455 aa).

Residues 1 to 15 show a composition bias toward polar residues; the sequence is MAPTNLTKKPSQYKQ. The interval 1-25 is disordered; that stretch reads MAPTNLTKKPSQYKQSSRKGKKAWR. The span at 16-25 shows a compositional bias: basic residues; it reads SSRKGKKAWR. Serine 31 is modified (phosphoserine). The segment at 264–333 is disordered; it reads HLMETLDDNE…RNKAKRHEEK (70 aa). The segment covering 268-294 has biased composition (acidic residues); that stretch reads TLDDNEEEESSSNEEEEEEEEENENEN. Basic residues predominate over residues 314-328; the sequence is VKNKKKTKYQRNKAK.

This sequence belongs to the NOP53 family. Interacts with CBF5, FPR3, FPR4, NOP2, PIH1, RRN3, RRP6 and PAP2. Interacts with pre-60S ribosomal particles.

The protein localises to the nucleus. It is found in the nucleolus. Its subcellular location is the nucleoplasm. Its function is as follows. Late-acting factor in the nuclear maturation of 60S ribosomal subunits, which is required for normal acquisition of export competence. Required for the export of the large subunit. Acts to stimulate the RNase activity of the exosome complex, and may recruit the exosome to 7S pre-rRNA for processing. Associates with numerous RNAs including the 27S and 7S pre-rRNAs and the box H/ACA snoRNA snR37. Also interacts (via N-terminal region) with the mature 25S rRNA and the mature 5.8S rRNA. This Saccharomyces cerevisiae (strain ATCC 204508 / S288c) (Baker's yeast) protein is Ribosome biogenesis protein NOP53.